Here is a 73-residue protein sequence, read N- to C-terminus: uncharacterized protein (73 aa).

This is an uncharacterized protein from Saccharolobus islandicus (Sulfolobus islandicus).